The chain runs to 125 residues: Plastocyanin (125 aa).

The signal sequence occupies residues M1–A34. A Plastocyanin-like domain is found at Q35–Q125. Cu cation is bound by residues H73, C110, H113, and M118.

This sequence belongs to the plastocyanin family. The cofactor is Cu(2+).

It is found in the cellular thylakoid membrane. In terms of biological role, participates in electron transfer between P700 and the cytochrome b6-f complex in photosystem I. This is Plastocyanin (petE) from Synechococcus elongatus (strain ATCC 33912 / PCC 7942 / FACHB-805) (Anacystis nidulans R2).